Consider the following 407-residue polypeptide: MNKLNKVILAYSGGLDTSIIIPWLKENYNCEVIAVCGNVGQKDELDGLEEKAIKTGASKLYIEDLTKEFVEDYIFPTIQAGAIYEGKYLLGTSFARPLIGKRLVEIAKAEGADAICHGCTGKGNDQVRFELAVKAFDPDMKIIAPWRIWDIKSREDEIAYAEARNVPIKINHETNYSKDKNIWHLSHEGLDLEDPKNEPKYDEILELSNSLEKAPNEPTYITLTFEKGNAVALNGEKMDAVTLLDELNKIGGKNAIGITDMVENRLVGMKSRGVYETPGGTILYKAHKDLEELCLDKETSHYKEQISLKFADLVYNGLWFTPLREALSEFIKKTQETVTGEIKLKLYKGNIVNAGMTSPYSLYSEEYATFGEDAVYNQNDSAGFITLYGLPTVVKAKMYQSLKKGTK.

10–18 provides a ligand contact to ATP; it reads AYSGGLDTS. L-citrulline-binding residues include Tyr-88 and Ser-93. Gly-118 provides a ligand contact to ATP. Residues Thr-120, Asn-124, and Asp-125 each coordinate L-aspartate. Asn-124 contacts L-citrulline. L-citrulline is bound by residues Arg-128, Ser-177, Ser-186, Glu-263, and Tyr-275.

This sequence belongs to the argininosuccinate synthase family. Type 1 subfamily. Homotetramer.

It is found in the cytoplasm. It catalyses the reaction L-citrulline + L-aspartate + ATP = 2-(N(omega)-L-arginino)succinate + AMP + diphosphate + H(+). It functions in the pathway amino-acid biosynthesis; L-arginine biosynthesis; L-arginine from L-ornithine and carbamoyl phosphate: step 2/3. This chain is Argininosuccinate synthase, found in Clostridium botulinum (strain Eklund 17B / Type B).